The chain runs to 627 residues: Meiosis-specific transcription factor NDT80 (627 aa).

The segment at residues 28–335 (EEDTPVILTQ…RSPSNYASSQ (308 aa)) is a DNA-binding region (NDT80). Residues 324-410 (RGRSPSNYAS…MEASKENEDP (87 aa)) are disordered. Polar residues-rich tracts occupy residues 327–351 (SPSNYASSQRITVRTPSSVNSSQNS) and 386–401 (SGASISPIKSRQSTPM).

As to quaternary structure, binds to DNA as a monomer. Phosphorylated by pachytene checkpoint kinase IME2, but also phosphorylated in an IME2-independent manner. Phosphorylation probably eliminates SUM1-mediated repression and is also required for full transcriptional activation activity. Phosphorylation of the DNA-binding domain by IME2 does not alter DNA binding affinity.

It is found in the nucleus. Transcription factor required for successful completion of meiosis and spore formation. Gets activated after completion of meiotic recombination at the end of prophase I. Recognizes and binds to the middle sporulation element (MSE) 5'-C[AG]CAAA[AT]-3' in the promoter region of stage-specific genes that are required for progression through meiosis and sporulation. Competes for binding to MSE with the transcriptional repressor SUM1, which represses middle sporulation-specific genes during mitosis and early sporulation. The polypeptide is Meiosis-specific transcription factor NDT80 (NDT80) (Saccharomyces cerevisiae (strain ATCC 204508 / S288c) (Baker's yeast)).